The sequence spans 1133 residues: Envelopment polyprotein (1133 aa).

Residues 1–16 (MWSLLLLAALVGQGFA) form the signal peptide. The Lumenal portion of the chain corresponds to 17 to 484 (LKNVFDMRIQ…PGFHGWATAA (468 aa)). 10 disulfide bridges follow: Cys-61/Cys-155, Cys-107/Cys-126, Cys-131/Cys-136, Cys-173/Cys-183, Cys-208/Cys-245, Cys-232/Cys-349, Cys-374/Cys-433, Cys-378/Cys-387, Cys-403/Cys-422, and Cys-450/Cys-473. Asn-132 carries N-linked (GlcNAc...) asparagine; by host glycosylation. Asn-233 and Asn-345 each carry an N-linked (GlcNAc...) asparagine; by host glycan. Asn-397 carries an N-linked (GlcNAc...) asparagine; by host glycan. The helical transmembrane segment at 485-504 (LLITFCFGWVLIPACTLAIL) threads the bilayer. Residues 505–626 (LVLKFFANIL…NLFRYKSRCY (122 aa)) are Cytoplasmic-facing. The segment at 514–531 (LHTSNQENRFKAILRKIK) is binding to the ribonucleoprotein. 2 consecutive CCHC-type zinc fingers follow at residues 543 to 563 (CEIC…NLSC) and 568 to 589 (CPYC…YKVC). Binding to the ribonucleoprotein stretches follow at residues 586 to 603 (YKVC…KKTV), 590 to 601 (QATHRFREDLKK), and 609 to 623 (GPGC…RYKS). Positions 609–632 (GPGCYRTLNLFRYKSRCYILTMWT) constitute an ITAM domain. Positions 613 to 616 (YRTL) match the YxxL motif. Residues 627–647 (ILTMWTLLLIIESILWAASAA) form a helical membrane-spanning segment. At 648–1105 (EIPLVPLWTD…VMGIINGNWV (458 aa)) the chain is on the lumenal side. Intrachain disulfides connect Cys-733-Cys-768, Cys-737-Cys-775, Cys-749-Cys-883, Cys-763-Cys-894, Cys-778-Cys-902, Cys-804-Cys-813, Cys-821-Cys-830, and Cys-861-Cys-865. Residues 755–775 (YEYENSWACNPPDCPGVGTGC) form a fusion loop region. Asn-926 carries N-linked (GlcNAc...) asparagine; by host glycosylation. Intrachain disulfides connect Cys-968–Cys-998, Cys-991–Cys-1043, Cys-1008–Cys-1013, Cys-1044–Cys-1049, and Cys-1083–Cys-1087. A helical membrane pass occupies residues 1106-1125 (VLIVLCVLLLFSLILLSILC). The binding to the ribonucleoprotein stretch occupies residues 1120-1133 (LLSILCPVRKHKKS). The Cytoplasmic segment spans residues 1126-1133 (PVRKHKKS).

This sequence belongs to the hantavirus envelope glycoprotein family. As to quaternary structure, homodimer. Homotetramer; forms heterotetrameric Gn-Gc spikes in the pre-fusion conformation. Interacts (via C-terminus) with the nucleoprotein. Interacts with host TUFM; this interaction contributes to the virus-induced degradation of mitochondria by autophagy, which leads to degradation of host MAVS and inhibition of type I interferon (IFN) responses. Interacts with host MAP1LC3B; this interaction contributes to the virus-induced degradation of mitochondria by autophagy, which leads to degradation of host MAVS and inhibition of type I interferon (IFN) responses. Homodimer. Homotetramer; forms heterotetrameric Gn-Gc spikes in the pre-fusion conformation. Homotrimer; forms homotrimer in the post-fusion conformation at acidic pH. Interacts (via C-terminus) with the nucleoprotein. Post-translationally, envelope polyprotein precursor is quickly cleaved in vivo just after synthesis, presumably by host signal peptidase.

It localises to the virion membrane. The protein resides in the host cell surface. It is found in the host Golgi apparatus membrane. The protein localises to the host endoplasmic reticulum membrane. Its subcellular location is the host mitochondrion. In terms of biological role, forms homotetramers with glycoprotein C at the surface of the virion. Attaches the virion to host cell receptors including integrin ITGAV/ITGB3. This attachment induces virion internalization predominantly through clathrin-dependent endocytosis. Mediates the assembly and budding of infectious virus particles through its interaction with the nucleocapsid protein and the viral genome. May dysregulate normal immune and endothelial cell responses through an ITAM motif. Translocates to mitochondria, binds to host TUFM and recruits MAP1LC3B. These interactions induce mitochondrial autophagy and therefore destruction of host MAVS leading to inhibition of type I interferon (IFN) responses. Concomitant breakdown of glycoprotein N is apparently prevented by the nucleoprotein that may inhibit Gn-stimulated autophagosome-lysosome fusion. Interacts with the viral genomic RNA. Functionally, forms homotetramers with glycoprotein N at the surface of the virion. Attaches the virion to host cell receptors including integrin ITGAV/ITGB3. This attachment induces virion internalization predominantly through clathrin-dependent endocytosis. Class II fusion protein that promotes fusion of viral membrane with host endosomal membrane after endocytosis of the virion. The sequence is that of Envelopment polyprotein (GP) from Homo sapiens (Human).